The following is a 1217-amino-acid chain: Disease resistance protein RPS4 (1217 aa).

In terms of domain architecture, TIR spans 14 to 175; the sequence is PQHQVFINFR…EIVKAVKTAL (162 aa). Residue glutamate 88 is part of the active site. The NB-ARC domain occupies 211–472; sequence EQRLKDLEEK…FRSQDKDYVE (262 aa). LRR repeat units follow at residues 260–285, 436–459, 614–636, 637–659, 682–706, 708–728, 729–749, 750–774, 796–818, 819–842, and 861–887; these read HALIDQIRVKSKHLELDRLPQMLLGE, PNIVSVFQVSYDELTTAQKDAFLD, LKEVRCLHWLKFPLETLPNDFNP, INLVDLKLPYSEMEQLWEGDKDT, AEKLQRLNLEGCTTLKAFPHDMKKM, MLAFLNLKGCTSLESLPEMNL, ISLKTLTLSGCSTFKEFPLIS, DNIETLYLDGTAISQLPMNMEKLQR, LKALQELILSDCLNLKIFPEIDI, SFLNILLLDGTAIEVMPQLPSVQY, and LSQLKWLDLKYCTSLTSVPEFPPNLQC. The disordered stretch occupies residues 1162-1195; that stretch reads TEGVDGRVKKKKKTRMDNGRPKKKQRSGRDDNQT. Residues 1170-1177 carry the Nuclear localization signal motif; that stretch reads KKKKKTRM.

As to quaternary structure, interacts with EDS1.

The protein resides in the nucleus. It catalyses the reaction NAD(+) + H2O = ADP-D-ribose + nicotinamide + H(+). Functionally, disease resistance (R) protein that specifically recognizes the AvrRps4 type III effector avirulence protein from Pseudomonas syringae. Resistance proteins guard the plant against pathogens that contain an appropriate avirulence protein via an indirect interaction with this avirulence protein. That triggers a defense system including the hypersensitive response, which restricts the pathogen growth. The combined presence of both regular and alternative RPS4 transcripts with truncated open reading frames (ORFs) is necessary for function. RPS4 function is regulated at multiple levels, including gene expression, alternative splicing, and protein stability. Acts as a disease resistance protein involved in resistance to fungal and bacterial pathogens, including R.solanacearum, P.syringae pv. tomato and C.higginsianum. In presence of RRS1, elicites an EDS1-dependent hypersensitive response. The polypeptide is Disease resistance protein RPS4 (Arabidopsis thaliana (Mouse-ear cress)).